The sequence spans 298 residues: Tyrosine recombinase XerC (298 aa).

Residues 1 to 84 enclose the Core-binding (CB) domain; sequence MNHIQEAFLN…TLRTFYEYWM (84 aa). The 182-residue stretch at 105 to 286 folds into the Tyr recombinase domain; sequence YLPQFFYEEE…SNQQLRKVYL (182 aa). Catalysis depends on residues Arg145, Lys169, His238, Arg241, and His264. Residue Tyr273 is the O-(3'-phospho-DNA)-tyrosine intermediate of the active site.

This sequence belongs to the 'phage' integrase family. XerC subfamily. As to quaternary structure, forms a cyclic heterotetrameric complex composed of two molecules of XerC and two molecules of XerD.

It localises to the cytoplasm. Site-specific tyrosine recombinase, which acts by catalyzing the cutting and rejoining of the recombining DNA molecules. The XerC-XerD complex is essential to convert dimers of the bacterial chromosome into monomers to permit their segregation at cell division. It also contributes to the segregational stability of plasmids. In Staphylococcus aureus (strain Mu3 / ATCC 700698), this protein is Tyrosine recombinase XerC.